Consider the following 278-residue polypeptide: Transcription initiation factor TFIID subunit 9 (278 aa).

Residues Thr-193–Asn-278 form a disordered region. Over residues Ser-200–Gln-210 the composition is skewed to gly residues. The segment covering Ala-231–Ala-240 has biased composition (low complexity). The segment covering Ser-241–Gly-259 has biased composition (gly residues). The segment covering Glu-269–Asn-278 has biased composition (acidic residues).

This sequence belongs to the TAF9 family. Belongs to the TFIID complex which is composed of TATA binding protein (Tbp) and a number of TBP-associated factors (TAFs). Taf9 and Taf6 exist as a heterotetramer. Interacts with e(y)2.

It localises to the nucleus. Its function is as follows. TFIID is a multimeric protein complex that plays a central role in mediating promoter responses to various activators and repressors. This chain is Transcription initiation factor TFIID subunit 9, found in Drosophila melanogaster (Fruit fly).